The primary structure comprises 135 residues: ATP synthase epsilon chain (135 aa).

Belongs to the ATPase epsilon chain family. F-type ATPases have 2 components, CF(1) - the catalytic core - and CF(0) - the membrane proton channel. CF(1) has five subunits: alpha(3), beta(3), gamma(1), delta(1), epsilon(1). CF(0) has three main subunits: a, b and c.

It localises to the cell inner membrane. Functionally, produces ATP from ADP in the presence of a proton gradient across the membrane. The sequence is that of ATP synthase epsilon chain from Nitrobacter winogradskyi (strain ATCC 25391 / DSM 10237 / CIP 104748 / NCIMB 11846 / Nb-255).